The primary structure comprises 232 residues: MGQKVHPNGIRLGIVKPWNATWFANTKDFADNLDGDFKVRQFLTSELKKASLSRIVIERPAKSIRVTIHTARPGVVIGKKGEDVEKLRAAVAKIAGVPAQINIAEVRKPELDAQLVGDSIASQLERRVMFRRAMKRAVQNAMRLGAKGIKVEVSGRLGGAEIARSEWYREGRVPLHTLRADIDYATSSAHTQYGVIGIKTWIFKGEILGGMPAANAVEPKGDKPKKQRKGRK.

In terms of domain architecture, KH type-2 spans 39 to 107 (VRQFLTSELK…PAQINIAEVR (69 aa)). Residues 213–232 (AANAVEPKGDKPKKQRKGRK) are disordered.

Belongs to the universal ribosomal protein uS3 family. Part of the 30S ribosomal subunit. Forms a tight complex with proteins S10 and S14.

Its function is as follows. Binds the lower part of the 30S subunit head. Binds mRNA in the 70S ribosome, positioning it for translation. The protein is Small ribosomal subunit protein uS3 of Vibrio parahaemolyticus serotype O3:K6 (strain RIMD 2210633).